The sequence spans 162 residues: NRR repressor homolog 3 (162 aa).

Residues 1–80 form a disordered region; that stretch reads MDPTMPTPHT…GHEEEARDED (80 aa). Polar residues predominate over residues 7–24; that stretch reads TPHTISGTSPFPRNSSTA. Basic residues predominate over residues 37 to 46; the sequence is PRHRRSRKRD. Basic and acidic residues predominate over residues 69–80; sequence GHGHEEEARDED.

The protein belongs to the NPR1-interactor family. Interacts with NPR1/NH1. Interacts with NPR3/NH3.

It localises to the nucleus. Binds to and represses NPR1/NH1-mediated transcriptional activation of LG2 in vitro. This Oryza sativa subsp. japonica (Rice) protein is NRR repressor homolog 3.